Consider the following 426-residue polypeptide: Glutamate-1-semialdehyde 2,1-aminomutase (426 aa).

Position 265 is an N6-(pyridoxal phosphate)lysine (Lys265).

The protein belongs to the class-III pyridoxal-phosphate-dependent aminotransferase family. HemL subfamily. As to quaternary structure, homodimer. Pyridoxal 5'-phosphate serves as cofactor.

The protein resides in the cytoplasm. The enzyme catalyses (S)-4-amino-5-oxopentanoate = 5-aminolevulinate. It functions in the pathway porphyrin-containing compound metabolism; protoporphyrin-IX biosynthesis; 5-aminolevulinate from L-glutamyl-tRNA(Glu): step 2/2. The chain is Glutamate-1-semialdehyde 2,1-aminomutase from Yersinia pestis bv. Antiqua (strain Antiqua).